A 305-amino-acid polypeptide reads, in one-letter code: Homoserine O-acetyltransferase (305 aa).

The Acyl-thioester intermediate role is filled by Cys-142. 2 residues coordinate substrate: Lys-163 and Ser-192. His-235 acts as the Proton acceptor in catalysis. Glu-237 is an active-site residue. Position 249 (Arg-249) interacts with substrate.

The protein belongs to the MetA family.

The protein resides in the cytoplasm. The catalysed reaction is L-homoserine + acetyl-CoA = O-acetyl-L-homoserine + CoA. It participates in amino-acid biosynthesis; L-methionine biosynthesis via de novo pathway; O-acetyl-L-homoserine from L-homoserine: step 1/1. Functionally, transfers an acetyl group from acetyl-CoA to L-homoserine, forming acetyl-L-homoserine. This is Homoserine O-acetyltransferase from Acetivibrio thermocellus (strain ATCC 27405 / DSM 1237 / JCM 9322 / NBRC 103400 / NCIMB 10682 / NRRL B-4536 / VPI 7372) (Clostridium thermocellum).